We begin with the raw amino-acid sequence, 111 residues long: C-type lectin lectoxin-Enh1 (111 aa).

Residues 1–23 form the signal peptide; that stretch reads MGQFTVVSLGLLAMFLSLSGAKG. Cysteine 26 and cysteine 37 form a disulfide bridge. The C-type lectin domain maps to 33–108; the sequence is RNGVCNKLFP…CASLHPFICQ (76 aa). A Mannose-binding motif is present at residues 72-74; that stretch reads EPN. Ca(2+) contacts are provided by glutamate 80, asparagine 95, and aspartate 96. Cysteines 82 and 99 form a disulfide.

Belongs to the true venom lectin family. In terms of tissue distribution, expressed by the venom gland.

The protein localises to the secreted. Its function is as follows. Mannose-binding lectin which recognizes specific carbohydrate structures and agglutinates a variety of animal cells by binding to cell-surface glycoproteins and glycolipids. May be a calcium-dependent lectin. The protein is C-type lectin lectoxin-Enh1 of Pseudoferania polylepis (Macleay's water snake).